Here is a 4923-residue protein sequence, read N- to C-terminus: Bridge-like lipid transfer protein family member 1 (4923 aa).

A helical membrane pass occupies residues 25 to 45 (FVWLLVATIMSCGWIIYLTYY). Disordered regions lie at residues 160–179 (NRDE…SVHI), 606–631 (HSKS…KPRW), 1203–1277 (SLHV…SARL), 1300–1334 (FSSE…DSST), 1357–1400 (TEEF…SVEG), 1471–1494 (TNKR…SEES), 1630–1660 (SAAK…DLSI), 1878–1948 (RDGV…PDSS), 2191–2235 (SKSH…LQCN), 2262–2281 (PHRA…RTGN), 2355–2375 (NTLD…QEDL), 2550–2655 (RYTA…SEQS), 2885–2910 (IRQP…VSIN), 3564–3596 (YSNS…IKVE), 3645–3695 (FSPT…RKSA), 3739–3797 (LHPS…SLQS), 3848–3884 (GMRD…AKGK), 4017–4071 (PTSA…TGPP), 4102–4124 (AVTG…SSVT), 4249–4309 (DGQT…AAAQ), and 4797–4827 (RMFA…EKEE). Over residues 1210–1226 (SHSSASSSEENSSSSAA) the composition is skewed to low complexity. Positions 1237–1248 (PSPSTELMNVTT) are enriched in polar residues. The span at 1260–1271 (SPLRSPLKRQSS) shows a compositional bias: low complexity. The segment covering 1641–1658 (TEGTTPGSLSTPHGQTDL) has biased composition (polar residues). The segment covering 1887–1898 (SSGSQTGSGYST) has biased composition (low complexity). A compositionally biased stretch (polar residues) spans 1907–1920 (NDAQSPASEPNNNS). Residues 1921-1931 (DSDEQDEGVES) are compositionally biased toward acidic residues. 2 stretches are compositionally biased toward polar residues: residues 2208–2218 (PYQSLSYTSGD) and 2267–2281 (EQTA…RTGN). Positions 2550–2560 (RYTAGSSSPTP) are enriched in polar residues. Positions 2606–2624 (TRSREPRGRGTLGRSERRT) are enriched in basic and acidic residues. The span at 3581–3595 (KRSDRPREDLPDIKV) shows a compositional bias: basic and acidic residues. The span at 3746-3770 (TEHEDLALRRSCERSSRSLDQDSPP) shows a compositional bias: basic and acidic residues. Residues 4017–4039 (PTSATYPSEGQHTPSSTPPSVHN) are compositionally biased toward polar residues. Positions 4044 to 4056 (PGGPSTGLGSPLG) are enriched in low complexity. Composition is skewed to polar residues over residues 4249–4268 (DGQT…TPSH), 4276–4286 (TGRTRSVSDSS), and 4804–4814 (GQKSPTTQQDE). Positions 4816–4827 (SSDKKEEREKEE) are enriched in basic and acidic residues.

The protein localises to the cell membrane. Its subcellular location is the endoplasmic reticulum membrane. The protein resides in the mitochondrion membrane. Functionally, tube-forming lipid transport protein which provides phosphatidylethanolamine for glycosylphosphatidylinositol (GPI) anchor synthesis in the endoplasmic reticulum. Plays a role in endosomal trafficking and endosome recycling. Also involved in the actin cytoskeleton and cilia structural dynamics. Acts as a regulator of phagocytosis. The protein is Bridge-like lipid transfer protein family member 1 (bltp1) of Danio rerio (Zebrafish).